We begin with the raw amino-acid sequence, 211 residues long: Small ribosomal subunit protein uS3 (211 aa).

The 69-residue stretch at 38 to 106 folds into the KH type-2 domain; that stretch reads LRNFLKKRLY…EIYLNIQEVR (69 aa).

Belongs to the universal ribosomal protein uS3 family. In terms of assembly, part of the 30S ribosomal subunit. Forms a tight complex with proteins S10 and S14.

Binds the lower part of the 30S subunit head. Binds mRNA in the 70S ribosome, positioning it for translation. The polypeptide is Small ribosomal subunit protein uS3 (Geobacter sulfurreducens (strain ATCC 51573 / DSM 12127 / PCA)).